A 316-amino-acid polypeptide reads, in one-letter code: Erythritol catabolism regulatory protein EryD (316 aa).

The segment at residues 23 to 42 (QSAVAKRLGLPSVKAHRLIA) is a DNA-binding region (H-T-H motif).

It belongs to the SorC transcriptional regulatory family.

With respect to regulation, erythritol may act as an inducer, probably by binding to EryD and inhibiting its repressor activity. In terms of biological role, represses the expression of the eryABCD operon, which is involved in erythritol catabolism. This chain is Erythritol catabolism regulatory protein EryD, found in Brucella abortus (strain 2308).